A 401-amino-acid polypeptide reads, in one-letter code: Type I restriction enzyme EcoprrI specificity subunit (401 aa).

It belongs to the type-I restriction system S methylase family. As to quaternary structure, the type I restriction/modification system is composed of three polypeptides R, M and S; the restriction enzyme has stoichiometry R(2)M(2)S(1) while the methyltransferase is M(2)S(1).

In terms of biological role, the specificity (S) subunit of a type I restriction enzyme; this subunit dictates DNA sequence specificity. The M and S subunits together form a methyltransferase (MTase) that methylates two adenine residues of the sequence 5'-CCAN(7)ATGC-3'. In the presence of the R subunit the complex can also act as an endonuclease, binding to the same target sequence but cutting the DNA some distance from this site. Whether the DNA is cut or modified depends on the methylation state of the target sequence. When the target site is unmodified, the DNA is cut. When the target site is hemimethylated, the complex acts as a maintenance MTase modifying the DNA so that both strands become methylated. After locating a non-methylated recognition site, the enzyme complex serves as a molecular motor that translocates DNA in an ATP-dependent manner until a collision occurs that triggers cleavage. This is Type I restriction enzyme EcoprrI specificity subunit (prrB) from Escherichia coli.